We begin with the raw amino-acid sequence, 398 residues long: DNA replication and repair protein RecF (398 aa).

Residue 30-37 (GRNGFGKT) coordinates ATP.

This sequence belongs to the RecF family.

It is found in the cytoplasm. Functionally, the RecF protein is involved in DNA metabolism; it is required for DNA replication and normal SOS inducibility. RecF binds preferentially to single-stranded, linear DNA. It also seems to bind ATP. The sequence is that of DNA replication and repair protein RecF from Corynebacterium efficiens (strain DSM 44549 / YS-314 / AJ 12310 / JCM 11189 / NBRC 100395).